A 157-amino-acid polypeptide reads, in one-letter code: Nascent polypeptide-associated complex subunit beta (157 aa).

The disordered stretch occupies residues 1-28; that stretch reads MPVDPEKLAKLQKSSAKKVGGSRVKAKK. One can recognise an NAC-A/B domain in the interval 33-98; that stretch reads EQDDTKLIEA…PQEKNITQLI (66 aa). The segment at 124–157 is disordered; that stretch reads KTPKDFNTGSANAAADAGGEDIPDLVDQKFDDVE.

The protein belongs to the NAC-beta family. In terms of assembly, part of the nascent polypeptide-associated complex (NAC), consisting of EGD2 and EGD1. NAC associates with ribosomes via EGD1.

Its subcellular location is the cytoplasm. It localises to the nucleus. Its function is as follows. Component of the nascent polypeptide-associated complex (NAC), a dynamic component of the ribosomal exit tunnel, protecting the emerging polypeptides from interaction with other cytoplasmic proteins to ensure appropriate nascent protein targeting. The NAC complex also promotes mitochondrial protein import by enhancing productive ribosome interactions with the outer mitochondrial membrane and blocks the inappropriate interaction of ribosomes translating non-secretory nascent polypeptides with translocation sites in the membrane of the endoplasmic reticulum. EGD1 may act as a transcription factor that exert a negative effect on the expression of several genes that are transcribed by RNA polymerase II. In Candida albicans (strain SC5314 / ATCC MYA-2876) (Yeast), this protein is Nascent polypeptide-associated complex subunit beta (EGD1).